We begin with the raw amino-acid sequence, 291 residues long: 33 kDa chaperonin (291 aa).

Disulfide bonds link Cys229/Cys231 and Cys262/Cys265.

It belongs to the HSP33 family. In terms of processing, under oxidizing conditions two disulfide bonds are formed involving the reactive cysteines. Under reducing conditions zinc is bound to the reactive cysteines and the protein is inactive.

The protein resides in the cytoplasm. Its function is as follows. Redox regulated molecular chaperone. Protects both thermally unfolding and oxidatively damaged proteins from irreversible aggregation. Plays an important role in the bacterial defense system toward oxidative stress. In Aliivibrio salmonicida (strain LFI1238) (Vibrio salmonicida (strain LFI1238)), this protein is 33 kDa chaperonin.